Reading from the N-terminus, the 275-residue chain is Taurine transport system permease protein TauC (275 aa).

The next 7 helical transmembrane spans lie at 20–42 (LSRQ…WTVA), 87–107 (IMLA…AMGL), 124–144 (PVPP…GETS), 146–166 (ILLI…AGVK), 186–206 (VLWF…LRIG), 209–229 (VGWS…LGFM), and 236–256 (FLAT…AFLL). Residues 80–264 (LAASLTRIML…LLELGLRALQ (185 aa)) form the ABC transmembrane type-1 domain.

It belongs to the binding-protein-dependent transport system permease family. CysTW subfamily.

The protein localises to the cell inner membrane. In terms of biological role, part of a binding-protein-dependent transport system for taurine. Probably responsible for the translocation of the substrate across the membrane. This chain is Taurine transport system permease protein TauC (tauC), found in Escherichia coli (strain K12).